The sequence spans 561 residues: Eukaryotic translation initiation factor 3 subunit D-1 (561 aa).

The disordered stretch occupies residues 98-164; sequence VQKPPHQRGR…RGPPPKMRES (67 aa). The span at 100–121 shows a compositional bias: basic residues; it reads KPPHQRGRFRNMRNSRSGRGRN. The residue at position 128 (T128) is a Phosphothreonine. Positions 289 to 303 are RNA gate; it reads EFDLLTVNETSVEPP.

This sequence belongs to the eIF-3 subunit D family. As to quaternary structure, component of the eukaryotic translation initiation factor 3 (eIF-3) complex. The eIF-3 complex interacts with pix.

Its subcellular location is the cytoplasm. Its function is as follows. mRNA cap-binding component of the eukaryotic translation initiation factor 3 (eIF-3) complex, which is involved in protein synthesis of a specialized repertoire of mRNAs and, together with other initiation factors, stimulates binding of mRNA and methionyl-tRNAi to the 40S ribosome. The eIF-3 complex specifically targets and initiates translation of a subset of mRNAs involved in cell proliferation. In the eIF-3 complex, eif3d specifically recognizes and binds the 7-methylguanosine cap of a subset of mRNAs. The chain is Eukaryotic translation initiation factor 3 subunit D-1 from Drosophila ananassae (Fruit fly).